The sequence spans 540 residues: Probable protein kinase UbiB (540 aa).

The chain crosses the membrane as a helical span at residues Leu24 to Trp44. Residues Arg126–Leu494 enclose the Protein kinase domain. ATP-binding positions include Leu132–Val140 and Lys154. Asp289 acts as the Proton acceptor in catalysis. 2 helical membrane passes run Leu496–Ala516 and Leu518–Val538.

The protein belongs to the ABC1 family. UbiB subfamily.

It localises to the cell inner membrane. It participates in cofactor biosynthesis; ubiquinone biosynthesis [regulation]. Functionally, is probably a protein kinase regulator of UbiI activity which is involved in aerobic coenzyme Q (ubiquinone) biosynthesis. This chain is Probable protein kinase UbiB, found in Pseudomonas putida (strain GB-1).